The chain runs to 60 residues: MDHRLLEIIACPVCNGKLWYNQEQQELICKLDNLAFPLRDGIPVLLENEARALTSDESKS.

The protein belongs to the UPF0434 family.

This is UPF0434 protein YcaR from Salmonella agona (strain SL483).